The primary structure comprises 334 residues: Glycerol-3-phosphate dehydrogenase [NAD(P)+] 2 (334 aa).

The NADPH site is built by Trp16, Arg36, Arg37, and Lys110. The sn-glycerol 3-phosphate site is built by Lys110 and Gly140. Ala144 serves as a coordination point for NADPH. Lys195, Asp248, Ser258, Arg259, and Asn260 together coordinate sn-glycerol 3-phosphate. The active-site Proton acceptor is the Lys195. An NADPH-binding site is contributed by Arg259. Residues Val282 and Glu284 each coordinate NADPH.

This sequence belongs to the NAD-dependent glycerol-3-phosphate dehydrogenase family.

Its subcellular location is the cytoplasm. It carries out the reaction sn-glycerol 3-phosphate + NAD(+) = dihydroxyacetone phosphate + NADH + H(+). The enzyme catalyses sn-glycerol 3-phosphate + NADP(+) = dihydroxyacetone phosphate + NADPH + H(+). The protein operates within membrane lipid metabolism; glycerophospholipid metabolism. Catalyzes the reduction of the glycolytic intermediate dihydroxyacetone phosphate (DHAP) to sn-glycerol 3-phosphate (G3P), the key precursor for phospholipid synthesis. The polypeptide is Glycerol-3-phosphate dehydrogenase [NAD(P)+] 2 (Mycobacterium bovis (strain ATCC BAA-935 / AF2122/97)).